Consider the following 571-residue polypeptide: Proline--tRNA ligase (571 aa).

The protein belongs to the class-II aminoacyl-tRNA synthetase family. ProS type 1 subfamily. In terms of assembly, homodimer.

The protein resides in the cytoplasm. The enzyme catalyses tRNA(Pro) + L-proline + ATP = L-prolyl-tRNA(Pro) + AMP + diphosphate. Its function is as follows. Catalyzes the attachment of proline to tRNA(Pro) in a two-step reaction: proline is first activated by ATP to form Pro-AMP and then transferred to the acceptor end of tRNA(Pro). As ProRS can inadvertently accommodate and process non-cognate amino acids such as alanine and cysteine, to avoid such errors it has two additional distinct editing activities against alanine. One activity is designated as 'pretransfer' editing and involves the tRNA(Pro)-independent hydrolysis of activated Ala-AMP. The other activity is designated 'posttransfer' editing and involves deacylation of mischarged Ala-tRNA(Pro). The misacylated Cys-tRNA(Pro) is not edited by ProRS. The chain is Proline--tRNA ligase from Azotobacter vinelandii (strain DJ / ATCC BAA-1303).